A 271-amino-acid polypeptide reads, in one-letter code: ATP synthase subunit a (271 aa).

A run of 5 helical transmembrane segments spans residues phenylalanine 38 to valine 58, leucine 100 to leucine 120, aspartate 146 to isoleucine 166, leucine 220 to proline 240, and alanine 242 to valine 262.

This sequence belongs to the ATPase A chain family. F-type ATPases have 2 components, CF(1) - the catalytic core - and CF(0) - the membrane proton channel. CF(1) has five subunits: alpha(3), beta(3), gamma(1), delta(1), epsilon(1). CF(0) has three main subunits: a(1), b(2) and c(9-12). The alpha and beta chains form an alternating ring which encloses part of the gamma chain. CF(1) is attached to CF(0) by a central stalk formed by the gamma and epsilon chains, while a peripheral stalk is formed by the delta and b chains.

It localises to the cell inner membrane. Functionally, key component of the proton channel; it plays a direct role in the translocation of protons across the membrane. The protein is ATP synthase subunit a of Salmonella choleraesuis (strain SC-B67).